Here is a 350-residue protein sequence, read N- to C-terminus: N-acetyl-gamma-glutamyl-phosphate reductase (350 aa).

Cysteine 154 is a catalytic residue.

Belongs to the NAGSA dehydrogenase family. Type 1 subfamily.

It is found in the cytoplasm. The catalysed reaction is N-acetyl-L-glutamate 5-semialdehyde + phosphate + NADP(+) = N-acetyl-L-glutamyl 5-phosphate + NADPH + H(+). Its pathway is amino-acid biosynthesis; L-arginine biosynthesis; N(2)-acetyl-L-ornithine from L-glutamate: step 3/4. In terms of biological role, catalyzes the NADPH-dependent reduction of N-acetyl-5-glutamyl phosphate to yield N-acetyl-L-glutamate 5-semialdehyde. The polypeptide is N-acetyl-gamma-glutamyl-phosphate reductase (Corynebacterium efficiens (strain DSM 44549 / YS-314 / AJ 12310 / JCM 11189 / NBRC 100395)).